The following is a 211-amino-acid chain: C-type lectin domain-containing protein 158 (211 aa).

Residues 1-16 form the signal peptide; that stretch reads MQKFILSAFVVALVAA.

The chain is C-type lectin domain-containing protein 158 (clec-158) from Caenorhabditis elegans.